The chain runs to 382 residues: Succinate--CoA ligase [ADP-forming] subunit beta (382 aa).

In terms of domain architecture, ATP-grasp spans 9–240 (KELFLRYGVK…PRDITEFEAY (232 aa)). Residues Lys45, 52–54 (GRG), Val94, and Glu99 contribute to the ATP site. Asn193 and Asp207 together coordinate Mg(2+). Substrate contacts are provided by residues Asn260 and 317 to 319 (GIT).

It belongs to the succinate/malate CoA ligase beta subunit family. Heterotetramer of two alpha and two beta subunits. Mg(2+) is required as a cofactor.

The catalysed reaction is succinate + ATP + CoA = succinyl-CoA + ADP + phosphate. It carries out the reaction GTP + succinate + CoA = succinyl-CoA + GDP + phosphate. It participates in carbohydrate metabolism; tricarboxylic acid cycle; succinate from succinyl-CoA (ligase route): step 1/1. In terms of biological role, succinyl-CoA synthetase functions in the citric acid cycle (TCA), coupling the hydrolysis of succinyl-CoA to the synthesis of either ATP or GTP and thus represents the only step of substrate-level phosphorylation in the TCA. The beta subunit provides nucleotide specificity of the enzyme and binds the substrate succinate, while the binding sites for coenzyme A and phosphate are found in the alpha subunit. The polypeptide is Succinate--CoA ligase [ADP-forming] subunit beta (Pyrobaculum islandicum (strain DSM 4184 / JCM 9189 / GEO3)).